We begin with the raw amino-acid sequence, 231 residues long: Putative carboxymethylenebutenolidase (231 aa).

Catalysis depends on residues Asp169 and His200.

It belongs to the dienelactone hydrolase family.

It carries out the reaction 2-(5-oxo-2,5-dihydrofuran-2-ylidene)acetate + H2O = 4-oxohex-2-enedioate + H(+). This chain is Putative carboxymethylenebutenolidase, found in Azospirillum brasilense.